A 434-amino-acid chain; its full sequence is ATP-dependent protease ATPase subunit HslU (434 aa).

ATP contacts are provided by residues Ile-18, 60–65 (GVGKTE), Asp-247, Glu-312, and Arg-384.

It belongs to the ClpX chaperone family. HslU subfamily. As to quaternary structure, a double ring-shaped homohexamer of HslV is capped on each side by a ring-shaped HslU homohexamer. The assembly of the HslU/HslV complex is dependent on binding of ATP.

It localises to the cytoplasm. ATPase subunit of a proteasome-like degradation complex; this subunit has chaperone activity. The binding of ATP and its subsequent hydrolysis by HslU are essential for unfolding of protein substrates subsequently hydrolyzed by HslV. HslU recognizes the N-terminal part of its protein substrates and unfolds these before they are guided to HslV for hydrolysis. In Brucella abortus (strain S19), this protein is ATP-dependent protease ATPase subunit HslU.